A 520-amino-acid chain; its full sequence is Ribonuclease Y (520 aa).

The chain crosses the membrane as a helical span at residues 3–23 (IEIQWIGIGAAFLVGAIGGAL). The 64-residue stretch at 210-273 (AVSVVPLPND…EVARLALERL (64 aa)) folds into the KH domain. Positions 336-429 (VLQHSIEVAF…VQAADALSGA (94 aa)) constitute an HD domain.

This sequence belongs to the RNase Y family.

Its subcellular location is the cell membrane. Its function is as follows. Endoribonuclease that initiates mRNA decay. This is Ribonuclease Y from Syntrophotalea carbinolica (strain DSM 2380 / NBRC 103641 / GraBd1) (Pelobacter carbinolicus).